Here is a 179-residue protein sequence, read N- to C-terminus: Large ribosomal subunit protein uL5 (179 aa).

It belongs to the universal ribosomal protein uL5 family. Part of the 50S ribosomal subunit; part of the 5S rRNA/L5/L18/L25 subcomplex. Contacts the 5S rRNA and the P site tRNA. Forms a bridge to the 30S subunit in the 70S ribosome.

Functionally, this is one of the proteins that bind and probably mediate the attachment of the 5S RNA into the large ribosomal subunit, where it forms part of the central protuberance. In the 70S ribosome it contacts protein S13 of the 30S subunit (bridge B1b), connecting the 2 subunits; this bridge is implicated in subunit movement. Contacts the P site tRNA; the 5S rRNA and some of its associated proteins might help stabilize positioning of ribosome-bound tRNAs. The protein is Large ribosomal subunit protein uL5 of Janthinobacterium sp. (strain Marseille) (Minibacterium massiliensis).